The chain runs to 352 residues: Peptide chain release factor 1 (352 aa).

N5-methylglutamine is present on Gln233. The tract at residues 288–309 (NAKDRKEQVGSGDRSERIRTYN) is disordered. Over residues 289–306 (AKDRKEQVGSGDRSERIR) the composition is skewed to basic and acidic residues.

This sequence belongs to the prokaryotic/mitochondrial release factor family. Methylated by PrmC. Methylation increases the termination efficiency of RF1.

The protein resides in the cytoplasm. In terms of biological role, peptide chain release factor 1 directs the termination of translation in response to the peptide chain termination codons UAG and UAA. The chain is Peptide chain release factor 1 from Helicobacter pylori (strain G27).